The sequence spans 159 residues: Peptide methionine sulfoxide reductase MsrB (159 aa).

Residues 14-137 (TEKLKENLTE…NSASLKFIAK (124 aa)) enclose the MsrB domain. The active-site Nucleophile is Cys126.

This sequence belongs to the MsrB Met sulfoxide reductase family.

It carries out the reaction L-methionyl-[protein] + [thioredoxin]-disulfide + H2O = L-methionyl-(R)-S-oxide-[protein] + [thioredoxin]-dithiol. In Hathewaya histolytica (Clostridium histolyticum), this protein is Peptide methionine sulfoxide reductase MsrB.